The following is a 530-amino-acid chain: Probable glycerol-3-phosphate acyltransferase 2 (530 aa).

The next 3 membrane-spanning stretches (helical) occupy residues Tyr70 to Leu90, Phe93 to Gly113, and Leu275 to Gly295. The HXXXXD motif motif lies at His339–Asp344.

Belongs to the GPAT/DAPAT family. In terms of tissue distribution, weakly or not expressed in roots, leaves, seedlings, developing siliques and flower buds.

The protein resides in the membrane. It carries out the reaction sn-glycerol 3-phosphate + an acyl-CoA = a 1-acyl-sn-glycero-3-phosphate + CoA. It functions in the pathway phospholipid metabolism; CDP-diacylglycerol biosynthesis; CDP-diacylglycerol from sn-glycerol 3-phosphate: step 1/3. Esterifies acyl-group from acyl-ACP to the sn-1 position of glycerol-3-phosphate, an essential step in glycerolipid biosynthesis. This is Probable glycerol-3-phosphate acyltransferase 2 (GPAT2) from Arabidopsis thaliana (Mouse-ear cress).